The primary structure comprises 85 residues: Alpha-mammal toxin AaH2 (85 aa).

An N-terminal signal peptide occupies residues 1–19; it reads MNYLVMISLALLFVTGVES. The region spanning 21 to 83 is the LCN-type CS-alpha/beta domain; the sequence is KDGYIVDDVN…VRTKGPGRCH (63 aa). Cystine bridges form between C31–C82, C35–C55, C41–C65, and C45–C67. Position 83 is a histidine amide (H83).

Belongs to the long (4 C-C) scorpion toxin superfamily. Sodium channel inhibitor family. Alpha subfamily. Post-translationally, the amidation of His-83 is not necessary for toxicity. Expressed by the venom gland.

It localises to the secreted. In terms of biological role, alpha toxin that binds voltage-independently at site-3 of sodium channels (Nav), inhibits the inactivation of the activated channels, and weakly inhibits activation, thereby blocking neuronal transmission. Inserts into voltage-sensing domain IV to stabilize a deactivated state, thereby preventing fast-inactivation. Principally slows the inactivation process of TTX-sensitive sodium channels. It is active on mammalian brain Nav1.2/SCN2A (EC(50)human=0.72 nM, EC(50)rat=2.6 nM), on rat skeletal muscle Nav1.4/SCN4A (EC(50)=2.2 nM), and on human neuronal Nav1.7/SCN9A (EC(50)=6.8-51.7 nM). In vivo, intraplantar injection into mice induces spontaneous pain responses. This chain is Alpha-mammal toxin AaH2, found in Androctonus australis (Sahara scorpion).